The chain runs to 202 residues: Helix-loop-helix protein 10 (202 aa).

Disordered stretches follow at residues 1-26 and 83-112; these read MESS…NSEL and QNKS…GKID. Residues 17-26 show a composition bias toward polar residues; the sequence is STGNHGNSEL. Residues 121 to 134 are basic motif; that stretch reads TRRYEANARERNRV. The bHLH domain occupies 121-172; it reads TRRYEANARERNRVQQLSKMFDQLRVCLPIEDDAKISKLATLKVASSYIGYL. The helix-loop-helix motif stretch occupies residues 135–172; the sequence is QQLSKMFDQLRVCLPIEDDAKISKLATLKVASSYIGYL.

In terms of assembly, heterodimer with hlh-2. Expressed in intestine, neurons in head, body and tail, and in body hypodermis, and vulva. Expressed in neurons in the male-specific genital sensilla (simple sense organs) known as rays.

It is found in the nucleus. The protein resides in the cytoplasm. Functionally, probable transcription factor which binds the E box motif 5'-CA[TC][AG]TG-3'. This is Helix-loop-helix protein 10 from Caenorhabditis elegans.